The primary structure comprises 597 residues: Electron transfer flavoprotein-ubiquinone oxidoreductase, mitochondrial (597 aa).

FAD is bound at residue 53-67 (VVIVGGGPSGLSAAI). Residues 91 to 112 (IGGHTLSGAVIETRALDELIPN) lie within the membrane without spanning it. Residues Gly-285 and Gly-286 each contribute to the a ubiquinone site. An intramembrane segment occupies 409–426 (IDPATYDKNIRDTYVVKE). Cys-540, Cys-566, Cys-569, and Cys-572 together coordinate [4Fe-4S] cluster. The 4Fe-4S ferredoxin-type domain maps to 557–586 (KRLQINAQNCIHCKTCDIKDPQQNINWVTP).

The protein belongs to the ETF-QO/FixC family. As to quaternary structure, monomer. It depends on [4Fe-4S] cluster as a cofactor. The cofactor is FAD.

The protein resides in the mitochondrion inner membrane. It carries out the reaction a ubiquinone + reduced [electron-transfer flavoprotein] = a ubiquinol + oxidized [electron-transfer flavoprotein] + H(+). Accepts electrons from ETF and reduces ubiquinone. This chain is Electron transfer flavoprotein-ubiquinone oxidoreductase, mitochondrial (let-721), found in Caenorhabditis elegans.